A 161-amino-acid chain; its full sequence is Nucleotide-binding protein HCH_04620 (161 aa).

Belongs to the YajQ family.

Its function is as follows. Nucleotide-binding protein. The chain is Nucleotide-binding protein HCH_04620 from Hahella chejuensis (strain KCTC 2396).